The following is a 220-amino-acid chain: uncharacterized protein (220 aa).

Helical transmembrane passes span 9–29, 54–74, 105–125, and 177–197; these read LWITLAILTLVVMINIHGSTQ, YAVHGMRFFALFFWLVPFLAV, VQGIAFVVLICLPLLTAIHLW, and VLAVILTAVSVYLTLRLVIEM.

Its subcellular location is the cell membrane. This is an uncharacterized protein from Sinorhizobium fredii (strain NBRC 101917 / NGR234).